The following is a 347-amino-acid chain: F-box protein At2g14500 (347 aa).

The F-box domain maps to 6 to 52; the sequence is PLTLSELPHDLLRNIFNRLSFADFHRATWNSISKQTAPPKTKSPWLI.

The sequence is that of F-box protein At2g14500 from Arabidopsis thaliana (Mouse-ear cress).